A 217-amino-acid chain; its full sequence is Glycine betaine/carnitine/choline transport system permease protein OpuCB (217 aa).

In terms of domain architecture, ABC transmembrane type-1 spans 19–198 (TGEHLYISLI…ILAIIIDYVL (180 aa)). 6 consecutive transmembrane segments (helical) span residues 23–43 (LYISLIAVVLGIIVAVPLGVA), 52–74 (GAVIGFVNIVQTLPSLAILAFFI), 84–101 (AIVALFFYSVLPILRNTY), 128–148 (LVEIPLAIPIIMAGIRTSTIY), 150–170 (IGWATLASFIGGGGLGDYIFI), and 180–200 (IIGGAVPVTILAIIIDYVLAV).

This sequence belongs to the binding-protein-dependent transport system permease family. CysTW subfamily. In terms of assembly, the complex is composed of two ATP-binding proteins (OpuCA), two transmembrane proteins (OpuCB and OpuCD) and a solute-binding protein (OpuCC).

It is found in the cell membrane. In terms of biological role, involved in a high affinity multicomponent binding-protein-dependent transport system for glycine betaine, carnitine and choline; probably responsible for the translocation of the substrate across the membrane. This chain is Glycine betaine/carnitine/choline transport system permease protein OpuCB (opuCB), found in Bacillus subtilis (strain 168).